The following is a 53-amino-acid chain: Antilisterial bacteriocin subtilosin biosynthesis protein AlbB (53 aa).

The next 2 membrane-spanning stretches (helical) occupy residues 8–28 (ILLY…FVKS) and 30–50 (YLFT…ARKA).

Its subcellular location is the cell membrane. Functionally, involved in the production of the bacteriocin subtilosin. Required for maximal production and for optimal immunity to subtilosin. The sequence is that of Antilisterial bacteriocin subtilosin biosynthesis protein AlbB (albB) from Bacillus subtilis (strain 168).